Reading from the N-terminus, the 500-residue chain is Probable cytosol aminopeptidase (500 aa).

Positions 265 and 270 each coordinate Mn(2+). Lys277 is a catalytic residue. Mn(2+) is bound by residues Asp288, Asp347, and Glu349. Arg351 is an active-site residue.

The protein belongs to the peptidase M17 family. It depends on Mn(2+) as a cofactor.

The protein resides in the cytoplasm. The enzyme catalyses Release of an N-terminal amino acid, Xaa-|-Yaa-, in which Xaa is preferably Leu, but may be other amino acids including Pro although not Arg or Lys, and Yaa may be Pro. Amino acid amides and methyl esters are also readily hydrolyzed, but rates on arylamides are exceedingly low.. It carries out the reaction Release of an N-terminal amino acid, preferentially leucine, but not glutamic or aspartic acids.. Presumably involved in the processing and regular turnover of intracellular proteins. Catalyzes the removal of unsubstituted N-terminal amino acids from various peptides. The polypeptide is Probable cytosol aminopeptidase (Rickettsia felis (strain ATCC VR-1525 / URRWXCal2) (Rickettsia azadi)).